The chain runs to 248 residues: UPF0736 protein BCE_1296 (248 aa).

Belongs to the UPF0736 family.

This is UPF0736 protein BCE_1296 from Bacillus cereus (strain ATCC 10987 / NRS 248).